A 430-amino-acid chain; its full sequence is Adenylosuccinate synthetase (430 aa).

Residues Gly-12–Lys-18 and Gly-40–Thr-42 contribute to the GTP site. Asp-13 functions as the Proton acceptor in the catalytic mechanism. Mg(2+) contacts are provided by Asp-13 and Gly-40. IMP is bound by residues Asp-13–Lys-16, Asn-38–His-41, Thr-130, Arg-144, Gln-224, Thr-239, and Arg-303. His-41 serves as the catalytic Proton donor. Thr-299 to Arg-305 is a binding site for substrate. GTP is bound by residues Arg-305, Lys-331–Asp-333, and Ser-413–Ser-415.

This sequence belongs to the adenylosuccinate synthetase family. In terms of assembly, homodimer. Mg(2+) serves as cofactor.

It is found in the cytoplasm. The enzyme catalyses IMP + L-aspartate + GTP = N(6)-(1,2-dicarboxyethyl)-AMP + GDP + phosphate + 2 H(+). The protein operates within purine metabolism; AMP biosynthesis via de novo pathway; AMP from IMP: step 1/2. Its function is as follows. Plays an important role in the de novo pathway of purine nucleotide biosynthesis. Catalyzes the first committed step in the biosynthesis of AMP from IMP. The polypeptide is Adenylosuccinate synthetase (Parvibaculum lavamentivorans (strain DS-1 / DSM 13023 / NCIMB 13966)).